The primary structure comprises 147 residues: Elongation factor Tu (147 aa).

The protein belongs to the GTP-binding elongation factor family. EF-Tu/EF-1A subfamily. In terms of assembly, monomer.

The protein localises to the cytoplasm. Its function is as follows. This protein promotes the GTP-dependent binding of aminoacyl-tRNA to the A-site of ribosomes during protein biosynthesis. The chain is Elongation factor Tu (tuf) from Fructilactobacillus sanfranciscensis (Lactobacillus sanfranciscensis).